Here is a 100-residue protein sequence, read N- to C-terminus: Small ribosomal subunit protein uS14c (100 aa).

This sequence belongs to the universal ribosomal protein uS14 family. Part of the 30S ribosomal subunit.

Its subcellular location is the plastid. It localises to the chloroplast. Functionally, binds 16S rRNA, required for the assembly of 30S particles. The polypeptide is Small ribosomal subunit protein uS14c (Ceratophyllum demersum (Rigid hornwort)).